Consider the following 860-residue polypeptide: Eukaryotic translation initiation factor 3 subunit C (860 aa).

The disordered stretch occupies residues 1–76; it reads MSRFFYGNDS…SEESEEEDVV (76 aa). Over residues 10-51 the composition is skewed to acidic residues; that stretch reads SDSDSSGSDEEELYSDEEVEQSEEESSEEDASSEEESSEDED. A PCI domain is found at 599–773; the sequence is FHMHINLELL…DAIVFRKGVE (175 aa). The disordered stretch occupies residues 812–860; that stretch reads RDQGAGARGGRGPRGGGQARGGPRLPGGQQRRPGGQQFGGGALGGAIKA. Positions 817–831 are enriched in gly residues; that stretch reads GARGGRGPRGGGQAR. A compositionally biased stretch (low complexity) spans 832 to 846; sequence GGPRLPGGQQRRPGG. Residues 847–860 show a composition bias toward gly residues; sequence QQFGGGALGGAIKA.

Belongs to the eIF-3 subunit C family. In terms of assembly, component of the eukaryotic translation initiation factor 3 (eIF-3) complex.

It localises to the cytoplasm. Functionally, component of the eukaryotic translation initiation factor 3 (eIF-3) complex, which is involved in protein synthesis of a specialized repertoire of mRNAs and, together with other initiation factors, stimulates binding of mRNA and methionyl-tRNAi to the 40S ribosome. The eIF-3 complex specifically targets and initiates translation of a subset of mRNAs involved in cell proliferation. The protein is Eukaryotic translation initiation factor 3 subunit C (nip1) of Emericella nidulans (strain FGSC A4 / ATCC 38163 / CBS 112.46 / NRRL 194 / M139) (Aspergillus nidulans).